Here is a 79-residue protein sequence, read N- to C-terminus: Sec-independent protein translocase protein TatA (79 aa).

A helical membrane pass occupies residues 1-21 (MGGISIWQLLIIALIVVLLFG). Positions 43–79 (MSSEEDKKALEDTEAAKTAQTTQQATEKKPESNKEQA) are disordered. Over residues 46–57 (EEDKKALEDTEA) the composition is skewed to basic and acidic residues. A compositionally biased stretch (low complexity) spans 58–67 (AKTAQTTQQA). A compositionally biased stretch (basic and acidic residues) spans 68 to 79 (TEKKPESNKEQA).

The protein belongs to the TatA/E family. In terms of assembly, the Tat system comprises two distinct complexes: a TatABC complex, containing multiple copies of TatA, TatB and TatC subunits, and a separate TatA complex, containing only TatA subunits. Substrates initially bind to the TatABC complex, which probably triggers association of the separate TatA complex to form the active translocon.

It is found in the cell inner membrane. Functionally, part of the twin-arginine translocation (Tat) system that transports large folded proteins containing a characteristic twin-arginine motif in their signal peptide across membranes. TatA could form the protein-conducting channel of the Tat system. The protein is Sec-independent protein translocase protein TatA of Shewanella putrefaciens (strain CN-32 / ATCC BAA-453).